The chain runs to 322 residues: Ferrochelatase (322 aa).

The Fe cation site is built by H193 and E274.

This sequence belongs to the ferrochelatase family.

It localises to the cytoplasm. It carries out the reaction heme b + 2 H(+) = protoporphyrin IX + Fe(2+). Its pathway is porphyrin-containing compound metabolism; protoheme biosynthesis; protoheme from protoporphyrin-IX: step 1/1. In terms of biological role, catalyzes the ferrous insertion into protoporphyrin IX. The sequence is that of Ferrochelatase from Photobacterium profundum (strain SS9).